Here is a 142-residue protein sequence, read N- to C-terminus: MGIAKEFREFAVKGNVIDLAVGVIIGGAFGKIVDSVVSDLIMPVVGLVFGKLDFSNLFIVLGSVPEGTPYTLEAIRKAGVPVLAYGNFITVAVNFVILAFIIFVMVKQINRLKRETPVEPPAPPATPEDIQLLREIRDSLKR.

3 helical membrane passes run 10 to 30 (FAVK…GAFG), 40 to 60 (LIMP…LFIV), and 86 to 106 (GNFI…FVMV).

It belongs to the MscL family. As to quaternary structure, homopentamer.

It is found in the cell inner membrane. Channel that opens in response to stretch forces in the membrane lipid bilayer. May participate in the regulation of osmotic pressure changes within the cell. The protein is Large-conductance mechanosensitive channel of Acidovorax ebreus (strain TPSY) (Diaphorobacter sp. (strain TPSY)).